The following is a 194-amino-acid chain: Small ribosomal subunit protein uS7 (194 aa).

The protein belongs to the universal ribosomal protein uS7 family. Part of the 30S ribosomal subunit.

Functionally, one of the primary rRNA binding proteins, it binds directly to 16S rRNA where it nucleates assembly of the head domain of the 30S subunit. Is located at the subunit interface close to the decoding center. The polypeptide is Small ribosomal subunit protein uS7 (Methanocorpusculum labreanum (strain ATCC 43576 / DSM 4855 / Z)).